Consider the following 231-residue polypeptide: 26S proteasome non-ATPase regulatory subunit 10 (231 aa).

7 ANK repeats span residues 3 to 36 (GCVS…ATRT), 37 to 69 (DQDS…VNEK), 70 to 102 (DDAG…VNAV), 103 to 135 (NQNG…PDAK), 136 to 168 (NHYD…TNIQ), 169 to 201 (DTEG…IYIE), and 202 to 226 (NKEE…IAES).

As to quaternary structure, part of transient complex containing PSMD10, PSMC4, PSMC5 and PAAF1 formed during the assembly of the 26S proteasome. Stays associated throughout the assembly of the PA700/19S RC and is released upon association with the 20S core. Interacts with PSMC4. Interacts with RB1. Interacts with CDK4. Interacts with MDM2. Interacts with RELA. Associates with a CDK4:CCND2 serine/threonine kinase complex. Interacts with ARHGDIA and increases the interaction between ARHGDIA and RHOA, hence promotes ARHGDIA inactivation of RHOA and ROCK.

Its subcellular location is the cytoplasm. The protein localises to the nucleus. Its function is as follows. Acts as a chaperone during the assembly of the 26S proteasome, specifically of the PA700/19S regulatory complex (RC). In the initial step of the base subcomplex assembly is part of an intermediate PSMD10:PSMC4:PSMC5:PAAF1 module which probably assembles with a PSMD5:PSMC2:PSMC1:PSMD2 module. Independently of the proteasome, regulates EGF-induced AKT activation through inhibition of the RHOA/ROCK/PTEN pathway, leading to prolonged AKT activation. Plays an important role in RAS-induced tumorigenesis. Functionally, acts as an oncoprotein by being involved in negative regulation of tumor suppressors RB1 and p53/TP53. Overexpression is leading to phosphorylation of RB1 and proteasomal degradation of RB1. Regulates CDK4-mediated phosphorylation of RB1 by competing with CDKN2A for binding with CDK4. Facilitates binding of MDM2 to p53/TP53 and the mono- and polyubiquitination of p53/TP53 by MDM2 suggesting a function in targeting the TP53:MDM2 complex to the 26S proteasome. Involved in p53-independent apoptosis. Involved in regulation of NF-kappa-B by retaining it in the cytoplasm. Binds to the NF-kappa-B component RELA and accelerates its XPO1/CRM1-mediated nuclear export. This Rattus norvegicus (Rat) protein is 26S proteasome non-ATPase regulatory subunit 10 (Psmd10).